A 392-amino-acid chain; its full sequence is Dual-specificity RNA methyltransferase RlmN (392 aa).

Catalysis depends on glutamate 116, which acts as the Proton acceptor. The Radical SAM core domain maps to glutamate 122–aspartate 364. A disulfide bond links cysteine 129 and cysteine 369. Positions 136, 140, and 143 each coordinate [4Fe-4S] cluster. S-adenosyl-L-methionine contacts are provided by residues glycine 195–glutamate 196, serine 227, serine 249–histidine 251, and asparagine 326. The active-site S-methylcysteine intermediate is the cysteine 369.

Belongs to the radical SAM superfamily. RlmN family. Requires [4Fe-4S] cluster as cofactor.

The protein resides in the cytoplasm. It catalyses the reaction adenosine(2503) in 23S rRNA + 2 reduced [2Fe-2S]-[ferredoxin] + 2 S-adenosyl-L-methionine = 2-methyladenosine(2503) in 23S rRNA + 5'-deoxyadenosine + L-methionine + 2 oxidized [2Fe-2S]-[ferredoxin] + S-adenosyl-L-homocysteine. It carries out the reaction adenosine(37) in tRNA + 2 reduced [2Fe-2S]-[ferredoxin] + 2 S-adenosyl-L-methionine = 2-methyladenosine(37) in tRNA + 5'-deoxyadenosine + L-methionine + 2 oxidized [2Fe-2S]-[ferredoxin] + S-adenosyl-L-homocysteine. Its function is as follows. Specifically methylates position 2 of adenine 2503 in 23S rRNA and position 2 of adenine 37 in tRNAs. m2A2503 modification seems to play a crucial role in the proofreading step occurring at the peptidyl transferase center and thus would serve to optimize ribosomal fidelity. This is Dual-specificity RNA methyltransferase RlmN from Cereibacter sphaeroides (strain ATCC 17029 / ATH 2.4.9) (Rhodobacter sphaeroides).